The following is a 438-amino-acid chain: NADH-quinone oxidoreductase subunit D (438 aa).

Belongs to the complex I 49 kDa subunit family. In terms of assembly, NDH-1 is composed of 14 different subunits. Subunits NuoB, C, D, E, F, and G constitute the peripheral sector of the complex.

It is found in the cell membrane. It carries out the reaction a quinone + NADH + 5 H(+)(in) = a quinol + NAD(+) + 4 H(+)(out). In terms of biological role, NDH-1 shuttles electrons from NADH, via FMN and iron-sulfur (Fe-S) centers, to quinones in the respiratory chain. The immediate electron acceptor for the enzyme in this species is believed to be a menaquinone. Couples the redox reaction to proton translocation (for every two electrons transferred, four hydrogen ions are translocated across the cytoplasmic membrane), and thus conserves the redox energy in a proton gradient. This Rhodococcus jostii (strain RHA1) protein is NADH-quinone oxidoreductase subunit D.